A 315-amino-acid chain; its full sequence is MAATSLTAPPSFSGLRRISPKLDAAAVSSHQSFFHRVNSSTRLVSSSSSSHRSPRGVVAMAGSGKFFVGGNWKCNGTKDSIAKLISDLNSATLEADVDVVVSPPFVYIDQVKSSLTDRIDISGQNSWVGKGGAFTGEISVEQLKDLGCKWVILGHSERRHVIGEKDEFIGKKAAYALSEGLGVIACIGEKLEEREAGKTFDVCFAQLKAFADAVPSWDNIVVAYEPVWAIGTGKVASPQQAQEVHVAVRGWLKKNVSEEVASKTRIIYGGSVNGGNSAELAKEEDIDGFLVGGASLKGPEFATIVNSVTSKKVAA.

Residues 1–60 (MAATSLTAPPSFSGLRRISPKLDAAAVSSHQSFFHRVNSSTRLVSSSSSSHRSPRGVVAM) constitute a chloroplast transit peptide. Substrate contacts are provided by Asn-71 and Lys-73. The active-site Electrophile is His-155. The residue at position 178 (Ser-178) is a Phosphoserine. Glu-225 (proton acceptor) is an active-site residue.

The protein belongs to the triosephosphate isomerase family. In terms of assembly, homodimer.

The protein localises to the plastid. The protein resides in the chloroplast. The enzyme catalyses D-glyceraldehyde 3-phosphate = dihydroxyacetone phosphate. The protein operates within carbohydrate biosynthesis; Calvin cycle. This is Triosephosphate isomerase, chloroplastic (TIM) from Arabidopsis thaliana (Mouse-ear cress).